A 133-amino-acid chain; its full sequence is Interferon-induced transmembrane protein 3 (133 aa).

The Cytoplasmic portion of the chain corresponds to 1 to 57; it reads MNHTVQTFFSPVNSGQPPNYEMLKEEHEVAVLGAPHNPAPPTSTVIHIRSETSVPDH. A Phosphotyrosine modification is found at tyrosine 20. Lysine 24 participates in a covalent cross-link: Glycyl lysine isopeptide (Lys-Gly) (interchain with G-Cter in ubiquitin). The segment at residues 58–78 is an intramembrane region (helical); it reads VVWSLFNTLFMNPCCLGFIAF. The tract at residues 60–93 is interaction with SPP1; it reads WSLFNTLFMNPCCLGFIAFAYSVKSRDRKMVGDV. 2 S-palmitoyl cysteine lipidation sites follow: cysteine 71 and cysteine 72. At 79-107 the chain is on the cytoplasmic side; the sequence is AYSVKSRDRKMVGDVTGAQAYASTAKCLN. Residues lysine 83, lysine 88, and lysine 104 each participate in a glycyl lysine isopeptide (Lys-Gly) (interchain with G-Cter in ubiquitin) cross-link. A lipid anchor (S-palmitoyl cysteine) is attached at cysteine 105. Residues 108–128 traverse the membrane as a helical segment; it reads IWALILGILMTILLIVIPVLI. The interval 108 to 133 is interaction with VAPA; the sequence is IWALILGILMTILLIVIPVLIFQAYG. The Extracellular segment spans residues 129-133; sequence FQAYG.

It belongs to the CD225/Dispanin family. In terms of assembly, interacts with ATP6V0B. Interacts with CD81. Interacts with SPP1; the interaction reduces OPN expression. Interacts with VAPA. Interacts with BRI3 (isoforms 1 and 2); the interaction with isoform 2 is weaker than with isoform 1. Post-translationally, palmitoylation on membrane-proximal cysteines controls clustering in membrane compartments and antiviral activity against influenza virus and hepatitis C virus (HCV). Has no effect on anti-SARS-CoV-2 activity. In terms of processing, not glycosylated. Polyubiquitinated with both 'Lys-48' and 'Lys-63' linkages. Ubiquitination negatively regulates antiviral activity. Lys-24 is the most prevalent ubiquitination site. Post-translationally, phosphorylation at Tyr-20 is required for endosomal and lysosomal location.

The protein resides in the cell membrane. It localises to the late endosome membrane. It is found in the early endosome membrane. Its subcellular location is the lysosome membrane. The protein localises to the cytoplasm. The protein resides in the perinuclear region. Its function is as follows. IFN-induced antiviral protein which disrupts intracellular cholesterol homeostasis. Inhibits the entry of viruses to the host cell cytoplasm by preventing viral fusion with cholesterol depleted endosomes. May inactivate new enveloped viruses which buds out of the infected cell, by letting them go out with a cholesterol depleted membrane. Active against multiple viruses, including influenza A virus, SARS coronaviruses (SARS-CoV and SARS-CoV-2), Marburg virus (MARV), Ebola virus (EBOV), Dengue virus (DNV), West Nile virus (WNV), human immunodeficiency virus type 1 (HIV-1), hepatitis C virus (HCV) and vesicular stomatitis virus (VSV). Can inhibit: influenza virus hemagglutinin protein-mediated viral entry, MARV and EBOV GP1,2-mediated viral entry, SARS-CoV and SARS-CoV-2 S protein-mediated viral entry and VSV G protein-mediated viral entry. Plays a critical role in the structural stability and function of vacuolar ATPase (v-ATPase). Establishes physical contact with the v-ATPase of endosomes which is critical for proper clathrin localization and is also required for the function of the v-ATPase to lower the pH in phagocytic endosomes thus establishing an antiviral state. In hepatocytes, IFITM proteins act in a coordinated manner to restrict HCV infection by targeting the endocytosed HCV virion for lysosomal degradation. IFITM2 and IFITM3 display anti-HCV activity that may complement the anti-HCV activity of IFITM1 by inhibiting the late stages of HCV entry, possibly in a coordinated manner by trapping the virion in the endosomal pathway and targeting it for degradation at the lysosome. Exerts opposing activities on SARS-CoV-2, including amphipathicity-dependent restriction of virus at endosomes and amphipathicity-independent enhancement of infection at the plasma membrane. This Homo sapiens (Human) protein is Interferon-induced transmembrane protein 3.